The sequence spans 240 residues: Tetrahydromethanopterin S-methyltransferase subunit A (240 aa).

Over 1 to 218 (MADKKEPAPG…KFHSGVHAGK (218 aa)) the chain is Cytoplasmic. His85 is a binding site for 5-hydroxybenzimidazolylcob(I)amide. The chain crosses the membrane as a helical span at residues 219–239 (IEGAMIGLTVTISLLGLLLLG). Residue Arg240 is a topological domain, extracellular.

Belongs to the MtrA family. As to quaternary structure, the complex is composed of 8 subunits; MtrA, MtrB, MtrC, MtrD, MtrE, MtrF, MtrG and MtrH. It depends on 5-hydroxybenzimidazolylcob(I)amide as a cofactor.

It localises to the cell membrane. It catalyses the reaction 5-methyl-5,6,7,8-tetrahydromethanopterin + coenzyme M + 2 Na(+)(in) = 5,6,7,8-tetrahydromethanopterin + methyl-coenzyme M + 2 Na(+)(out). The protein operates within one-carbon metabolism; methanogenesis from CO(2); methyl-coenzyme M from 5,10-methylene-5,6,7,8-tetrahydromethanopterin: step 2/2. Part of a complex that catalyzes the formation of methyl-coenzyme M and tetrahydromethanopterin from coenzyme M and methyl-tetrahydromethanopterin. This is an energy-conserving, sodium-ion translocating step. This chain is Tetrahydromethanopterin S-methyltransferase subunit A, found in Methanosarcina barkeri (strain Fusaro / DSM 804).